A 62-amino-acid polypeptide reads, in one-letter code: Small ribosomal subunit protein eS27 (62 aa).

Cysteine 17, cysteine 20, cysteine 36, and cysteine 39 together coordinate Zn(2+). A C4-type zinc finger spans residues 17-39 (CNDCENEQIIFGSASRKITCVVC).

It belongs to the eukaryotic ribosomal protein eS27 family. As to quaternary structure, part of the 30S ribosomal subunit. The cofactor is Zn(2+).

The protein is Small ribosomal subunit protein eS27 of Methanosarcina mazei (strain ATCC BAA-159 / DSM 3647 / Goe1 / Go1 / JCM 11833 / OCM 88) (Methanosarcina frisia).